We begin with the raw amino-acid sequence, 450 residues long: Molybdate-anion transporter (450 aa).

Transmembrane regions (helical) follow at residues 1-21 (MLVT…GLEL), 43-63 (LDFY…APYL), 79-99 (ILYV…SSLV), 128-148 (FVLL…FSAF), 174-194 (AAFW…AVAS), 195-215 (WIGL…ALAG), 249-269 (VLLL…FVFL), 278-298 (GAPL…GSSL), 311-331 (PMHL…MLTF), 344-364 (FIAF…MSFL), 376-396 (GVLN…LLVL), and 409-429 (FSIC…LFTV).

Belongs to the major facilitator superfamily. As to expression, expressed ubiquitously but at relatively higher levels in the olfactory bulb and the skeletal muscle.

Its subcellular location is the cell membrane. Mediates high-affinity intracellular uptake of the rare oligo-element molybdenum. In Homo sapiens (Human), this protein is Molybdate-anion transporter (MFSD5).